Here is a 293-residue protein sequence, read N- to C-terminus: Foldase protein PrsA 2 (293 aa).

A signal peptide spans 1–20; it reads MKKKLILGLVMMMALFSLAA. A lipid anchor (N-palmitoyl cysteine) is attached at cysteine 21. Cysteine 21 carries S-diacylglycerol cysteine lipidation. The PpiC domain occupies 135–226; sequence QPDITVSHIL…YGYHIIQMDK (92 aa).

The protein belongs to the PrsA family.

The protein localises to the cell membrane. It carries out the reaction [protein]-peptidylproline (omega=180) = [protein]-peptidylproline (omega=0). Functionally, plays a major role in protein secretion by helping the post-translocational extracellular folding of several secreted proteins. In Listeria monocytogenes serovar 1/2a (strain ATCC BAA-679 / EGD-e), this protein is Foldase protein PrsA 2 (prsA2).